A 177-amino-acid polypeptide reads, in one-letter code: Adenine phosphoribosyltransferase (177 aa).

The protein belongs to the purine/pyrimidine phosphoribosyltransferase family. In terms of assembly, homodimer.

Its subcellular location is the cytoplasm. The enzyme catalyses AMP + diphosphate = 5-phospho-alpha-D-ribose 1-diphosphate + adenine. The protein operates within purine metabolism; AMP biosynthesis via salvage pathway; AMP from adenine: step 1/1. Functionally, catalyzes a salvage reaction resulting in the formation of AMP, that is energically less costly than de novo synthesis. The chain is Adenine phosphoribosyltransferase from Acidothermus cellulolyticus (strain ATCC 43068 / DSM 8971 / 11B).